We begin with the raw amino-acid sequence, 525 residues long: GMP synthase [glutamine-hydrolyzing] (525 aa).

In terms of domain architecture, Glutamine amidotransferase type-1 spans 9-207 (RILILDFGSQ…VRDICQCEAL (199 aa)). Cys86 acts as the Nucleophile in catalysis. Catalysis depends on residues His181 and Glu183. A GMPS ATP-PPase domain is found at 208-400 (WTPAKIIDDA…LGLPYDMLYR (193 aa)). ATP is bound at residue 235 to 241 (SGGVDSS).

Homodimer.

The enzyme catalyses XMP + L-glutamine + ATP + H2O = GMP + L-glutamate + AMP + diphosphate + 2 H(+). Its pathway is purine metabolism; GMP biosynthesis; GMP from XMP (L-Gln route): step 1/1. In terms of biological role, catalyzes the synthesis of GMP from XMP. The sequence is that of GMP synthase [glutamine-hydrolyzing] from Shigella flexneri serotype 5b (strain 8401).